The sequence spans 277 residues: Large ribosomal subunit protein uL2 (277 aa).

2 disordered regions span residues Lys-32 to Gly-58 and Val-225 to Lys-277. Over residues Tyr-258 to Lys-277 the composition is skewed to basic residues.

This sequence belongs to the universal ribosomal protein uL2 family. In terms of assembly, part of the 50S ribosomal subunit. Forms a bridge to the 30S subunit in the 70S ribosome.

Its function is as follows. One of the primary rRNA binding proteins. Required for association of the 30S and 50S subunits to form the 70S ribosome, for tRNA binding and peptide bond formation. It has been suggested to have peptidyltransferase activity; this is somewhat controversial. Makes several contacts with the 16S rRNA in the 70S ribosome. The protein is Large ribosomal subunit protein uL2 of Borreliella burgdorferi (strain ATCC 35210 / DSM 4680 / CIP 102532 / B31) (Borrelia burgdorferi).